A 955-amino-acid polypeptide reads, in one-letter code: Disintegrin and metalloproteinase domain-containing protein 19 (955 aa).

The first 25 residues, methionine 1–alanine 25, serve as a signal peptide directing secretion. A propeptide spanning residues arginine 26–lysine 202 is cleaved from the precursor. The Cysteine switch signature appears at serine 130–glycine 137. Cysteine 132 is a binding site for Zn(2+). Asparagine 144 is a glycosylation site (N-linked (GlcNAc...) asparagine). Topologically, residues arginine 203–serine 699 are extracellular. Residues lysine 210 to proline 408 form the Peptidase M12B domain. Cystine bridges form between cysteine 320–cysteine 403, cysteine 360–cysteine 387, and cysteine 361–cysteine 370. Histidine 345 is a binding site for Zn(2+). Residue glutamate 346 is part of the active site. Zn(2+) contacts are provided by histidine 349 and histidine 355. The 87-residue stretch at glycine 416 to aspartate 502 folds into the Disintegrin domain. Residues asparagine 444 and asparagine 447 are each glycosylated (N-linked (GlcNAc...) asparagine). Cysteine 474 and cysteine 494 are joined by a disulfide. An N-linked (GlcNAc...) asparagine glycan is attached at asparagine 645. Residues glutamate 650–asparagine 682 enclose the EGF-like domain. 3 disulfide bridges follow: cysteine 654/cysteine 664, cysteine 658/cysteine 670, and cysteine 672/cysteine 681. The chain crosses the membrane as a helical span at residues valine 700–methionine 720. The Cytoplasmic segment spans residues tyrosine 721–alanine 955. The span at serine 753–glutamine 771 shows a compositional bias: polar residues. The interval serine 753–leucine 917 is disordered. Composition is skewed to pro residues over residues serine 787 to aspartate 796 and arginine 833 to proline 844. The SH3-binding motif lies at arginine 833–proline 844.

As to quaternary structure, interacts with SH3PXD2A. The cofactor is Zn(2+). The precursor is cleaved by a furin endopeptidase. Expressed in many normal organ tissues and several cancer cell lines.

It is found in the membrane. In terms of biological role, participates in the proteolytic processing of beta-type neuregulin isoforms which are involved in neurogenesis and synaptogenesis, suggesting a regulatory role in glial cell. Also cleaves alpha-2 macroglobulin. May be involved in osteoblast differentiation and/or osteoblast activity in bone. This is Disintegrin and metalloproteinase domain-containing protein 19 (ADAM19) from Homo sapiens (Human).